The following is a 310-amino-acid chain: L-lactate dehydrogenase (310 aa).

Residues Val-17, Asp-38, Lys-43, Tyr-69, and 83 to 84 (GA) contribute to the NAD(+) site. Positions 86 and 92 each coordinate substrate. NAD(+) is bound by residues Ser-105, 122-124 (ATN), and Ser-147. 124–127 (NPVD) is a substrate binding site. Residue 152-155 (DTAR) coordinates substrate. 2 residues coordinate beta-D-fructose 1,6-bisphosphate: Arg-157 and His-172. His-179 functions as the Proton acceptor in the catalytic mechanism. Tyr-218 is modified (phosphotyrosine). Thr-227 contributes to the substrate binding site.

Belongs to the LDH/MDH superfamily. LDH family. As to quaternary structure, homotetramer.

Its subcellular location is the cytoplasm. It catalyses the reaction (S)-lactate + NAD(+) = pyruvate + NADH + H(+). Its pathway is fermentation; pyruvate fermentation to lactate; (S)-lactate from pyruvate: step 1/1. Allosterically activated by fructose 1,6-bisphosphate (FBP). Catalyzes the conversion of lactate to pyruvate. In Halalkalibacterium halodurans (strain ATCC BAA-125 / DSM 18197 / FERM 7344 / JCM 9153 / C-125) (Bacillus halodurans), this protein is L-lactate dehydrogenase.